Consider the following 311-residue polypeptide: Pyrimidine-specific ribonucleoside hydrolase RihA (311 aa).

Residue His240 is part of the active site.

The protein belongs to the IUNH family. RihA subfamily.

In terms of biological role, hydrolyzes cytidine or uridine to ribose and cytosine or uracil, respectively. This is Pyrimidine-specific ribonucleoside hydrolase RihA from Shigella flexneri serotype 5b (strain 8401).